Consider the following 105-residue polypeptide: Pyrimidine/purine nucleoside phosphorylase (105 aa).

This sequence belongs to the nucleoside phosphorylase PpnP family.

It carries out the reaction a purine D-ribonucleoside + phosphate = a purine nucleobase + alpha-D-ribose 1-phosphate. The catalysed reaction is adenosine + phosphate = alpha-D-ribose 1-phosphate + adenine. It catalyses the reaction cytidine + phosphate = cytosine + alpha-D-ribose 1-phosphate. The enzyme catalyses guanosine + phosphate = alpha-D-ribose 1-phosphate + guanine. It carries out the reaction inosine + phosphate = alpha-D-ribose 1-phosphate + hypoxanthine. The catalysed reaction is thymidine + phosphate = 2-deoxy-alpha-D-ribose 1-phosphate + thymine. It catalyses the reaction uridine + phosphate = alpha-D-ribose 1-phosphate + uracil. The enzyme catalyses xanthosine + phosphate = alpha-D-ribose 1-phosphate + xanthine. In terms of biological role, catalyzes the phosphorolysis of diverse nucleosides, yielding D-ribose 1-phosphate and the respective free bases. Can use uridine, adenosine, guanosine, cytidine, thymidine, inosine and xanthosine as substrates. Also catalyzes the reverse reactions. This Clostridioides difficile (strain 630) (Peptoclostridium difficile) protein is Pyrimidine/purine nucleoside phosphorylase.